Here is a 65-residue protein sequence, read N- to C-terminus: MPKIKTLRSAAKRFKKTESGKFKRKQAHLRHILTKKNTHYKRHLRSKVMISKKDIQKVRLFLPYL.

Residues 1–26 (MPKIKTLRSAAKRFKKTESGKFKRKQ) form a disordered region.

The protein belongs to the bacterial ribosomal protein bL35 family.

The polypeptide is Large ribosomal subunit protein bL35 (Buchnera aphidicola subsp. Baizongia pistaciae (strain Bp)).